We begin with the raw amino-acid sequence, 394 residues long: Elongation factor Tu (394 aa).

The 196-residue stretch at 10 to 205 (KPHMNVGTIG…TMDSYFDLPE (196 aa)) folds into the tr-type G domain. Positions 19–26 (GHVDHGKT) are G1. 19–26 (GHVDHGKT) lines the GTP pocket. Thr-26 serves as a coordination point for Mg(2+). The tract at residues 61–65 (GITIN) is G2. The tract at residues 82 to 85 (DCPG) is G3. GTP-binding positions include 82-86 (DCPGH) and 137-140 (NKLD). Residues 137–140 (NKLD) are G4. Residues 173 to 175 (SAF) form a G5 region.

This sequence belongs to the TRAFAC class translation factor GTPase superfamily. Classic translation factor GTPase family. EF-Tu/EF-1A subfamily. In terms of assembly, monomer.

It is found in the cytoplasm. It carries out the reaction GTP + H2O = GDP + phosphate + H(+). Its function is as follows. GTP hydrolase that promotes the GTP-dependent binding of aminoacyl-tRNA to the A-site of ribosomes during protein biosynthesis. In Borrelia hermsii (strain HS1 / DAH), this protein is Elongation factor Tu.